We begin with the raw amino-acid sequence, 504 residues long: L-carnitine/gamma-butyrobetaine antiporter (504 aa).

A run of 12 helical transmembrane segments spans residues 10–30 (IEPKVFFPPLIIVGILCWLTV), 51–71 (WGWAFEWYMVVMLFGWFWLVF), 92–112 (IFMMFASCTSAAVLFWGSIEI), 143–163 (GPLPWATYSFLSVAFAYFFFV), 195–215 (FYLVALIFAMGTSLGLATPLV), 231–251 (LDAIIITCWIILHAICVACGL), 263–283 (SYLSFLMLGWVFIVSGASFIM), 316–336 (WTVFYWAWWVIYAIQMSIFLA), 347–367 (LCFGMVMGLTASTWILWTVLG), 398–418 (WAALPLSTATMWGFFILCFIA), 446–466 (LLVRIGWSILVGIIGIVLLAL), and 475–495 (AIIAGGCPLFFVNIMVTLSFI).

Belongs to the BCCT transporter (TC 2.A.15) family. CaiT subfamily. As to quaternary structure, homotrimer.

It localises to the cell inner membrane. It carries out the reaction 4-(trimethylamino)butanoate(in) + (R)-carnitine(out) = 4-(trimethylamino)butanoate(out) + (R)-carnitine(in). It participates in amine and polyamine metabolism; carnitine metabolism. Functionally, catalyzes the exchange of L-carnitine for gamma-butyrobetaine. This is L-carnitine/gamma-butyrobetaine antiporter from Shigella flexneri serotype 5b (strain 8401).